A 96-amino-acid polypeptide reads, in one-letter code: Cytochrome c-553 (96 aa).

Positions 1-19 are cleaved as a signal peptide; it reads MKKVIVALGVLAFANVLMA. The heme c site is built by Cys-29, Cys-32, His-33, and Met-73.

Belongs to the cytochrome c family. Binds 1 heme c group covalently per subunit.

The protein localises to the periplasm. Its function is as follows. Natural electron acceptor for a formate dehydrogenase. This is Cytochrome c-553 from Helicobacter pylori (strain J99 / ATCC 700824) (Campylobacter pylori J99).